We begin with the raw amino-acid sequence, 242 residues long: Ubiquitin-conjugating enzyme E2 6 (242 aa).

Over Met-1–Asn-217 the chain is Cytoplasmic. The region spanning Gln-5–Arg-163 is the UBC core domain. Cys-87 (glycyl thioester intermediate) is an active-site residue. Residues Ser-218–Thr-240 form a helical membrane-spanning segment.

This sequence belongs to the ubiquitin-conjugating enzyme family.

Its subcellular location is the endoplasmic reticulum membrane. The enzyme catalyses S-ubiquitinyl-[E1 ubiquitin-activating enzyme]-L-cysteine + [E2 ubiquitin-conjugating enzyme]-L-cysteine = [E1 ubiquitin-activating enzyme]-L-cysteine + S-ubiquitinyl-[E2 ubiquitin-conjugating enzyme]-L-cysteine.. The protein operates within protein modification; protein ubiquitination. Its function is as follows. Catalyzes the covalent attachment of ubiquitin to other proteins. Functions in degradation of misfolded or regulated proteins localized in the endoplasmic reticulum (ER) lumen or membrane via the ubiquitin-proteasome system. Cognate E2 conjugating enzyme for the DOA10 ubiquitin ligase complex, which is part of the ERAD-C pathway responsible for the rapid degradation of membrane proteins with misfolded cytoplasmic domains. The polypeptide is Ubiquitin-conjugating enzyme E2 6 (UBC6) (Eremothecium gossypii (strain ATCC 10895 / CBS 109.51 / FGSC 9923 / NRRL Y-1056) (Yeast)).